The primary structure comprises 562 residues: Alpha-amylase 2 (562 aa).

Asn236 provides a ligand contact to Ca(2+). The active-site Nucleophile is the Asp309. Glu338 serves as the catalytic Proton donor.

This sequence belongs to the glycosyl hydrolase 13 family. Monomer. Ca(2+) is required as a cofactor.

It is found in the cytoplasm. It carries out the reaction Endohydrolysis of (1-&gt;4)-alpha-D-glucosidic linkages in polysaccharides containing three or more (1-&gt;4)-alpha-linked D-glucose units.. The polypeptide is Alpha-amylase 2 (amyB) (Dictyoglomus thermophilum (strain ATCC 35947 / DSM 3960 / H-6-12)).